A 122-amino-acid chain; its full sequence is Large ribosomal subunit protein uL14 (122 aa).

Belongs to the universal ribosomal protein uL14 family. Part of the 50S ribosomal subunit. Forms a cluster with proteins L3 and L19. In the 70S ribosome, L14 and L19 interact and together make contacts with the 16S rRNA in bridges B5 and B8.

Functionally, binds to 23S rRNA. Forms part of two intersubunit bridges in the 70S ribosome. The sequence is that of Large ribosomal subunit protein uL14 from Amoebophilus asiaticus (strain 5a2).